The primary structure comprises 691 residues: Elongation factor G (691 aa).

Positions 12 to 286 constitute a tr-type G domain; that stretch reads KKLRNIGIMA…GVLEYLPSPL (275 aa). Residues 21–28, 85–89, and 139–142 each bind GTP; these read AHIDAGKT, DTPGH, and NKMD.

Belongs to the TRAFAC class translation factor GTPase superfamily. Classic translation factor GTPase family. EF-G/EF-2 subfamily.

The protein resides in the cytoplasm. Its function is as follows. Catalyzes the GTP-dependent ribosomal translocation step during translation elongation. During this step, the ribosome changes from the pre-translocational (PRE) to the post-translocational (POST) state as the newly formed A-site-bound peptidyl-tRNA and P-site-bound deacylated tRNA move to the P and E sites, respectively. Catalyzes the coordinated movement of the two tRNA molecules, the mRNA and conformational changes in the ribosome. This chain is Elongation factor G, found in Thermosipho melanesiensis (strain DSM 12029 / CIP 104789 / BI429).